A 313-amino-acid chain; its full sequence is Fructose-1,6-bisphosphatase class 1 (313 aa).

Positions 91, 112, 114, and 115 each coordinate Mg(2+). Substrate-binding positions include 115–118, Tyr223, and Lys254; that span reads DGSS. Glu260 serves as a coordination point for Mg(2+).

This sequence belongs to the FBPase class 1 family. Homotetramer. Mg(2+) serves as cofactor.

The protein resides in the cytoplasm. It catalyses the reaction beta-D-fructose 1,6-bisphosphate + H2O = beta-D-fructose 6-phosphate + phosphate. The protein operates within carbohydrate biosynthesis; gluconeogenesis. The sequence is that of Fructose-1,6-bisphosphatase class 1 from Geobacter sulfurreducens (strain ATCC 51573 / DSM 12127 / PCA).